The primary structure comprises 77 residues: Acyl carrier protein (77 aa).

The region spanning 2 to 77 (SNIEERVKKI…AAIDYVSKNQ (76 aa)) is the Carrier domain. The residue at position 37 (serine 37) is an O-(pantetheine 4'-phosphoryl)serine.

The protein belongs to the acyl carrier protein (ACP) family. Post-translationally, 4'-phosphopantetheine is transferred from CoA to a specific serine of apo-ACP by AcpS. This modification is essential for activity because fatty acids are bound in thioester linkage to the sulfhydryl of the prosthetic group.

The protein localises to the cytoplasm. It participates in lipid metabolism; fatty acid biosynthesis. Its function is as follows. Carrier of the growing fatty acid chain in fatty acid biosynthesis. The sequence is that of Acyl carrier protein from Shewanella denitrificans (strain OS217 / ATCC BAA-1090 / DSM 15013).